We begin with the raw amino-acid sequence, 334 residues long: Nucleoid-associated protein PMI0825 (334 aa).

The protein belongs to the YejK family.

It localises to the cytoplasm. The protein resides in the nucleoid. The polypeptide is Nucleoid-associated protein PMI0825 (Proteus mirabilis (strain HI4320)).